Here is a 149-residue protein sequence, read N- to C-terminus: Calmodulin (149 aa).

Position 2 is an N-acetylalanine (Ala2). EF-hand domains are found at residues 8 to 43 (EQIA…LGQN), 44 to 79 (PTEA…KMKE), 81 to 116 (DSEE…LGEK), and 117 to 149 (LTDE…MTSK). Ca(2+) is bound by residues Asp21, Asp23, Asp25, Thr27, Glu32, Asp57, Asp59, Asn61, Thr63, Glu68, Asp94, Asp96, Asn98, and Glu105. Lys116 bears the N6,N6,N6-trimethyllysine mark. 5 residues coordinate Ca(2+): Asp130, Asp132, Asp134, Gln136, and Glu141.

It belongs to the calmodulin family.

Calmodulin mediates the control of a large number of enzymes, ion channels and other proteins by Ca(2+). Among the enzymes to be stimulated by the calmodulin-Ca(2+) complex are a number of protein kinases and phosphatases. The protein is Calmodulin of Suberites domuncula (Sponge).